A 317-amino-acid polypeptide reads, in one-letter code: Pantothenate kinase (317 aa).

99–106 (GSVSVGKS) provides a ligand contact to ATP.

It belongs to the prokaryotic pantothenate kinase family.

It is found in the cytoplasm. The enzyme catalyses (R)-pantothenate + ATP = (R)-4'-phosphopantothenate + ADP + H(+). It participates in cofactor biosynthesis; coenzyme A biosynthesis; CoA from (R)-pantothenate: step 1/5. This chain is Pantothenate kinase, found in Histophilus somni (strain 129Pt) (Haemophilus somnus).